The following is a 453-amino-acid chain: Pup--protein ligase (453 aa).

Glutamate 9 is a binding site for Mg(2+). Arginine 53 contacts ATP. Tyrosine 55 contacts Mg(2+). Aspartate 57 (proton acceptor) is an active-site residue. Position 63 (glutamate 63) interacts with Mg(2+). ATP is bound by residues threonine 66 and tryptophan 420.

It belongs to the Pup ligase/Pup deamidase family. Pup-conjugating enzyme subfamily.

The catalysed reaction is ATP + [prokaryotic ubiquitin-like protein]-L-glutamate + [protein]-L-lysine = ADP + phosphate + N(6)-([prokaryotic ubiquitin-like protein]-gamma-L-glutamyl)-[protein]-L-lysine.. It participates in protein degradation; proteasomal Pup-dependent pathway. The protein operates within protein modification; protein pupylation. In terms of biological role, catalyzes the covalent attachment of the prokaryotic ubiquitin-like protein modifier Pup to the proteasomal substrate proteins, thereby targeting them for proteasomal degradation. This tagging system is termed pupylation. The ligation reaction involves the side-chain carboxylate of the C-terminal glutamate of Pup and the side-chain amino group of a substrate lysine. The sequence is that of Pup--protein ligase from Streptomyces scabiei (strain 87.22).